The chain runs to 352 residues: Homoserine O-acetyltransferase (352 aa).

The 294-residue stretch at 37 to 330 (NAVLVCHALT…APHGHDTFLI (294 aa)) folds into the AB hydrolase-1 domain. Serine 133 (nucleophile) is an active-site residue. Arginine 206 lines the substrate pocket. Active-site residues include aspartate 296 and histidine 325. Aspartate 326 contributes to the substrate binding site.

Belongs to the AB hydrolase superfamily. MetX family. As to quaternary structure, homodimer.

It is found in the cytoplasm. The enzyme catalyses L-homoserine + acetyl-CoA = O-acetyl-L-homoserine + CoA. The protein operates within amino-acid biosynthesis; L-methionine biosynthesis via de novo pathway; O-acetyl-L-homoserine from L-homoserine: step 1/1. Its function is as follows. Transfers an acetyl group from acetyl-CoA to L-homoserine, forming acetyl-L-homoserine. The chain is Homoserine O-acetyltransferase from Salinibacter ruber (strain DSM 13855 / M31).